Reading from the N-terminus, the 396-residue chain is Elongation factor Tu 1 (396 aa).

A tr-type G domain is found at 10 to 206 (KPHVNVGTIG…ALDTYIPTPE (197 aa)). A G1 region spans residues 19–26 (GHVDHGKT). GTP is bound at residue 19-26 (GHVDHGKT). Threonine 26 provides a ligand contact to Mg(2+). The interval 60–64 (GITIN) is G2. Positions 81–84 (DCPG) are G3. Residues 81 to 85 (DCPGH) and 136 to 139 (NKAD) each bind GTP. The interval 136-139 (NKAD) is G4. The tract at residues 174-176 (SAK) is G5.

It belongs to the TRAFAC class translation factor GTPase superfamily. Classic translation factor GTPase family. EF-Tu/EF-1A subfamily. Monomer.

The protein resides in the cytoplasm. The enzyme catalyses GTP + H2O = GDP + phosphate + H(+). Its function is as follows. GTP hydrolase that promotes the GTP-dependent binding of aminoacyl-tRNA to the A-site of ribosomes during protein biosynthesis. This Methylobacillus flagellatus (strain ATCC 51484 / DSM 6875 / VKM B-1610 / KT) protein is Elongation factor Tu 1.